Reading from the N-terminus, the 730-residue chain is MPDPSTYRPATGTIPAAPGVYKFRDPHGRVIYVGKAKSLRSRLNSYFADVTTLHPRTRQMVTTAGSVEWTVVSTEVEALQLEYNWIKEFDPRFNVRYRDDKTYPVLAVTLNEEFPRLFVYRGPRRKGVRYFGPYSHAWAIRETLDLLLRVFPARTCSSGVFKRHNQIGRPCLLGYIDKCSAPCVGRVSAEEHRQIVEDFCDFLAGRTDKLVKDLEKRMQQASEDLDFETAARLRDDIGALRKALEKQAVVLGDGTDADLVAFATDDLEAAVQVFHVRGGRVRGQRGWVVEKAGDAIDWAALDAESDLPILVEQFLTQFYGEQAALDPGAGSEAGISAVPKEVLVPVLPANATEIQAWLSKLRGSQVQLRVPQRGDKKDLAETVQRNAKEALAQHKLKRAGDFTSRSAALQGIQEALDLDSAPLRIECIDISHVQGTDVVASLVVFEDGLPRKSDYRHYAIKEAAGDGHSDDVASIAEITRRRFIRHNRDLGILAASASTMDADGGDLAPEAAIDPATGRPRRFAYPPNLFVVDGGAPQVTAAAAVLDELGVTDVAVVGLAKRLEEVWVPGEEDPVILPRTSESLYLLQRIRDEAHRFAITFHRSKRSRRMTASALDSVKGLGETRRTALVAHFGSVAKLKTATVEEIMQVPGIGETTATAVLAALGTDSAAADAGAEARALPAAVGDDELDKESESSVTSADAPSAESGSGDEGSESRELSMPTTGPSAQ.

Residues 16–95 (AAPGVYKFRD…IKEFDPRFNV (80 aa)) form the GIY-YIG domain. The region spanning 208 to 243 (DKLVKDLEKRMQQASEDLDFETAARLRDDIGALRKA) is the UVR domain. A disordered region spans residues 678–730 (ARALPAAVGDDELDKESESSVTSADAPSAESGSGDEGSESRELSMPTTGPSAQ).

This sequence belongs to the UvrC family. As to quaternary structure, interacts with UvrB in an incision complex.

Its subcellular location is the cytoplasm. Functionally, the UvrABC repair system catalyzes the recognition and processing of DNA lesions. UvrC both incises the 5' and 3' sides of the lesion. The N-terminal half is responsible for the 3' incision and the C-terminal half is responsible for the 5' incision. The sequence is that of UvrABC system protein C from Rhodococcus erythropolis (strain PR4 / NBRC 100887).